Consider the following 381-residue polypeptide: Spermidine/putrescine import ATP-binding protein PotA (381 aa).

One can recognise an ABC transporter domain in the interval 19–249 (VELRKVFKVF…PESPFVADFI (231 aa)). 51 to 58 (GPSGCGKT) is an ATP binding site.

Belongs to the ABC transporter superfamily. Spermidine/putrescine importer (TC 3.A.1.11.1) family. In terms of assembly, the complex is composed of two ATP-binding proteins (PotA), two transmembrane proteins (PotB and PotC) and a solute-binding protein (PotD).

It is found in the cell inner membrane. It carries out the reaction ATP + H2O + polyamine-[polyamine-binding protein]Side 1 = ADP + phosphate + polyamineSide 2 + [polyamine-binding protein]Side 1.. Part of the ABC transporter complex PotABCD involved in spermidine/putrescine import. Responsible for energy coupling to the transport system. This chain is Spermidine/putrescine import ATP-binding protein PotA, found in Trichodesmium erythraeum (strain IMS101).